The chain runs to 98 residues: NADH-ubiquinone oxidoreductase chain 4L (98 aa).

The next 3 membrane-spanning stretches (helical) occupy residues 1–21 (MSMVYINLFLAFIMSLMGLLV), 29–49 (SLLCLEGMMLSLFIMISITIL), and 61–81 (IILLVFAACEAALGLSLLVMV).

Belongs to the complex I subunit 4L family. In terms of assembly, core subunit of respiratory chain NADH dehydrogenase (Complex I) which is composed of 45 different subunits.

It is found in the mitochondrion inner membrane. It carries out the reaction a ubiquinone + NADH + 5 H(+)(in) = a ubiquinol + NAD(+) + 4 H(+)(out). Functionally, core subunit of the mitochondrial membrane respiratory chain NADH dehydrogenase (Complex I) which catalyzes electron transfer from NADH through the respiratory chain, using ubiquinone as an electron acceptor. Part of the enzyme membrane arm which is embedded in the lipid bilayer and involved in proton translocation. The sequence is that of NADH-ubiquinone oxidoreductase chain 4L (MT-ND4L) from Mephitis mephitis (Striped skunk).